The chain runs to 128 residues: uncharacterized protein (128 aa).

The stretch at 95 to 123 forms a coiled coil; that stretch reads IIDFATAKRELDRLTEEIATLKGELAQDK.

It is found in the cellular thylakoid membrane. This is an uncharacterized protein from Synechocystis sp. (strain ATCC 27184 / PCC 6803 / Kazusa).